Reading from the N-terminus, the 145-residue chain is Histone H2B (145 aa).

The interval 1-52 (MAPKAAAGKKPAEKKPVEEKKAEEVPAEKKPKAGKKLPKDAGRPDKKKKRAK) is disordered. N6-acetyllysine is present on residues Lys-9, Lys-35, and Lys-36. Over residues 10–44 (KPAEKKPVEEKKAEEVPAEKKPKAGKKLPKDAGRP) the composition is skewed to basic and acidic residues. A Glycyl lysine isopeptide (Lys-Gly) (interchain with G-Cter in ubiquitin) cross-link involves residue Lys-141.

Belongs to the histone H2B family. The nucleosome is a histone octamer containing two molecules each of H2A, H2B, H3 and H4 assembled in one H3-H4 heterotetramer and two H2A-H2B heterodimers. The octamer wraps approximately 147 bp of DNA. Post-translationally, can be acetylated to form H2BK6ac, H2BK33ac and H2BK34ac. In terms of processing, monoubiquitinated to form H2BK143ub1; may give a specific tag for epigenetic transcriptional activation. In terms of tissue distribution, in anthers, floral buds, pollen, petals and fruits.

The protein resides in the nucleus. It localises to the chromosome. Core component of nucleosome. Nucleosomes wrap and compact DNA into chromatin, limiting DNA accessibility to the cellular machineries which require DNA as a template. Histones thereby play a central role in transcription regulation, DNA repair, DNA replication and chromosomal stability. DNA accessibility is regulated via a complex set of post-translational modifications of histones, also called histone code, and nucleosome remodeling. This Capsicum annuum (Capsicum pepper) protein is Histone H2B (HIS2B).